The sequence spans 201 residues: Lymphocyte antigen 6 complex locus protein G5b (201 aa).

The N-terminal stretch at 1–18 (MKVHMLVGVLVMVGFTVG) is a signal peptide. The UPAR/Ly6 domain occupies 26 to 118 (RTCHFCLVED…SPQLQSSLPE (93 aa)). 5 cysteine pairs are disulfide-bonded: cysteine 28/cysteine 55, cysteine 31/cysteine 40, cysteine 47/cysteine 73, cysteine 81/cysteine 98, and cysteine 99/cysteine 104. Asparagine 141 and asparagine 183 each carry an N-linked (GlcNAc...) asparagine glycan.

Forms oligomer. N-glycosylated.

It is found in the secreted. This Homo sapiens (Human) protein is Lymphocyte antigen 6 complex locus protein G5b (LY6G5B).